Consider the following 369-residue polypeptide: Nuclear pore complex-interacting protein family member A6 (369 aa).

Residues 151 to 170 (SMKEREHGEKERQVSEAEEN) are disordered.

Belongs to the NPIP family.

The sequence is that of Nuclear pore complex-interacting protein family member A6 from Homo sapiens (Human).